The sequence spans 304 residues: Phosphoribosylaminoimidazole-succinocarboxamide synthase (304 aa).

This sequence belongs to the SAICAR synthetase family.

It catalyses the reaction 5-amino-1-(5-phospho-D-ribosyl)imidazole-4-carboxylate + L-aspartate + ATP = (2S)-2-[5-amino-1-(5-phospho-beta-D-ribosyl)imidazole-4-carboxamido]succinate + ADP + phosphate + 2 H(+). It participates in purine metabolism; IMP biosynthesis via de novo pathway; 5-amino-1-(5-phospho-D-ribosyl)imidazole-4-carboxamide from 5-amino-1-(5-phospho-D-ribosyl)imidazole-4-carboxylate: step 1/2. This chain is Phosphoribosylaminoimidazole-succinocarboxamide synthase (ADE1), found in Komagataella pastoris (Yeast).